The chain runs to 280 residues: Formamidopyrimidine-DNA glycosylase (280 aa).

Pro2 (schiff-base intermediate with DNA) is an active-site residue. The active-site Proton donor is the Glu3. The Proton donor; for beta-elimination activity role is filled by Lys58. 3 residues coordinate DNA: His91, Arg110, and Arg152. The FPG-type zinc finger occupies 237–271 (NVYGRENLPCPQCDSAIEKVVLNQRAAYFCSNCQK). Catalysis depends on Arg261, which acts as the Proton donor; for delta-elimination activity.

It belongs to the FPG family. As to quaternary structure, monomer. Requires Zn(2+) as cofactor.

It catalyses the reaction Hydrolysis of DNA containing ring-opened 7-methylguanine residues, releasing 2,6-diamino-4-hydroxy-5-(N-methyl)formamidopyrimidine.. The catalysed reaction is 2'-deoxyribonucleotide-(2'-deoxyribose 5'-phosphate)-2'-deoxyribonucleotide-DNA = a 3'-end 2'-deoxyribonucleotide-(2,3-dehydro-2,3-deoxyribose 5'-phosphate)-DNA + a 5'-end 5'-phospho-2'-deoxyribonucleoside-DNA + H(+). Involved in base excision repair of DNA damaged by oxidation or by mutagenic agents. Acts as a DNA glycosylase that recognizes and removes damaged bases. Has a preference for oxidized purines, such as 7,8-dihydro-8-oxoguanine (8-oxoG). Has AP (apurinic/apyrimidinic) lyase activity and introduces nicks in the DNA strand. Cleaves the DNA backbone by beta-delta elimination to generate a single-strand break at the site of the removed base with both 3'- and 5'-phosphates. The protein is Formamidopyrimidine-DNA glycosylase of Hydrogenovibrio crunogenus (strain DSM 25203 / XCL-2) (Thiomicrospira crunogena).